Reading from the N-terminus, the 456-residue chain is tRNA-2-methylthio-N(6)-dimethylallyladenosine synthase (456 aa).

The 119-residue stretch at 18–136 folds into the MTTase N-terminal domain; it reads EFFFIQTFGC…FPEYLHRVQV (119 aa). [4Fe-4S] cluster is bound by residues cysteine 27, cysteine 63, cysteine 97, cysteine 173, cysteine 177, and cysteine 180. In terms of domain architecture, Radical SAM core spans 159-391; it reads RKSNVKAFVT…AVNEGIVVGN (233 aa). The TRAM domain occupies 392–455; it reads KAAEGKIYEV…SFSLVGEVVE (64 aa).

This sequence belongs to the methylthiotransferase family. MiaB subfamily. As to quaternary structure, monomer. It depends on [4Fe-4S] cluster as a cofactor.

It localises to the cytoplasm. The catalysed reaction is N(6)-dimethylallyladenosine(37) in tRNA + (sulfur carrier)-SH + AH2 + 2 S-adenosyl-L-methionine = 2-methylsulfanyl-N(6)-dimethylallyladenosine(37) in tRNA + (sulfur carrier)-H + 5'-deoxyadenosine + L-methionine + A + S-adenosyl-L-homocysteine + 2 H(+). Its function is as follows. Catalyzes the methylthiolation of N6-(dimethylallyl)adenosine (i(6)A), leading to the formation of 2-methylthio-N6-(dimethylallyl)adenosine (ms(2)i(6)A) at position 37 in tRNAs that read codons beginning with uridine. The protein is tRNA-2-methylthio-N(6)-dimethylallyladenosine synthase of Clostridium botulinum (strain Alaska E43 / Type E3).